The primary structure comprises 782 residues: MTSIIKLTTLSGVQEESALCYLLQVDEFRFLLDCGWDEHFSVDIIDSLRKHVHQIDAVLLSHPDPLHLGALPFAVGKLGLNCAIYATIPVYKMGQMFMYDLYQSRHNTEDFTLFTLDDVDAAFDKIQQLKFSQIVNLKGKGHGLSITPLPAGHMIGGTIWKIVKDGEEEIVYAVDFNHKREIHLNGCSLEMLSRPSLLITDSFNATYVQPRRKQRDEQLLTNVLETLRGDGNVLIAVDTAGRVLELAQLLDQIWRTKDAGLGVYSLALLNNVSYNVVEFSKSQVEWMSDKLMRCFEDKRNNPFQFRHLSLCHGLSDLARVPSPKVVLASQPDLECGFSRDLFIQWCQDPKNSIILTYRTTPGTLARFLIDNPTEKVTEIELRKRVKLEGKELEEYVEKEKLKKEAAKKLEQSKEADIDSSDESDVEEDVDQPSAHKTKHDLMMKGEGSRKGSFFKQAKKSYPMFPAPEERIKWDEYGEIIKPEDFLVPELQATEEEKSKLESGLTNGEEPMDQDLSDVPTKCVSATESIEIKARVTYIDYEGRSDGDSIKKIINQMKPRQLIIVHGPPEASQDLAECCRAFGGKDIKVYMPKLHETVDATSETHIYQVRLKDSLVSSLQFCKAKDAELAWIDGVLDMRVSKVDTGVILEEGELKDDGEDSEMQVDAPSDSSAMAQQKAMKSLFGEDEKELGEETEIIPTLEPLPPHEVPGHQSVFMNEPRLSDFKQVLLREGIQAEFVGGVLVCNNQVAVRRTETGRIGLEGCLCQDFYRIRDLLYEQYAIV.

Basic and acidic residues predominate over residues 407 to 416; that stretch reads KKLEQSKEAD. Positions 407 to 449 are disordered; the sequence is KKLEQSKEADIDSSDESDVEEDVDQPSAHKTKHDLMMKGEGSR. Residues 417 to 430 show a composition bias toward acidic residues; it reads IDSSDESDVEEDVD. Residues Ser-419, Ser-420, and Ser-423 each carry the phosphoserine modification. Residues 439 to 449 are compositionally biased toward basic and acidic residues; the sequence is HDLMMKGEGSR. Ser-660 is subject to Phosphoserine.

This sequence belongs to the metallo-beta-lactamase superfamily. RNA-metabolizing metallo-beta-lactamase-like family. CPSF2/YSH1 subfamily. As to quaternary structure, component of the cleavage and polyadenylation specificity factor (CPSF) complex, composed of CPSF1, CPSF2, CPSF3, CPSF4 and FIP1L1. Interacts with CPSF3, CSTF2 and SYMPK. Interacts with ZC3H3.

It localises to the nucleus. In terms of biological role, component of the cleavage and polyadenylation specificity factor (CPSF) complex that play a key role in pre-mRNA 3'-end formation, recognizing the AAUAAA signal sequence and interacting with poly(A) polymerase and other factors to bring about cleavage and poly(A) addition. Involved in the histone 3' end pre-mRNA processing. This Mus musculus (Mouse) protein is Cleavage and polyadenylation specificity factor subunit 2 (Cpsf2).